Here is an 828-residue protein sequence, read N- to C-terminus: Protein kintoun (828 aa).

5 disordered regions span residues 1–31 (MSGSTASARNKHSKGNLKHNNNKNKNNDEPI), 223–250 (KNPTDEELEPHPLEHSFPTKPTAGEGEP), 383–424 (DSGV…PTSN), 556–668 (APVQ…HRGI), and 741–828 (KKNQ…EDLI). Over residues 9 to 22 (RNKHSKGNLKHNNN) the composition is skewed to basic residues. Ser384 is subject to Phosphoserine. The segment covering 395 to 414 (PVEEEEDGEDEIEAEEEEEE) has biased composition (acidic residues). Positions 556–573 (APVQEDKPGDIQFKRNDQ) are enriched in basic and acidic residues. Residues 591-601 (EREEGEIEEAE) show a composition bias toward acidic residues. The span at 606 to 620 (KKSASKKQRGKRNKK) shows a compositional bias: basic residues. Over residues 625 to 641 (SESACVSLPTSVDSQPM) the composition is skewed to polar residues. Residues 741–755 (KKNQKRRDCKLRAQQ) show a composition bias toward basic residues. A Phosphoserine modification is found at Ser759. A compositionally biased stretch (basic and acidic residues) spans 788–808 (DSGLDLTRHNKKRELAEEADN). Acidic residues predominate over residues 815-828 (EMDDDDDDEDEDLI).

It belongs to the PIH1 family. Kintoun subfamily. In terms of assembly, interacts with Pp1alpha-96A, Pp1-87B, Pp1-13C and flw.

It is found in the cytoplasm. In terms of biological role, required for cytoplasmic pre-assembly of axonemal dyneins, thereby playing a central role in motility in cilia and flagella. Involved in pre-assembly of dynein arm complexes in the cytoplasm before intraflagellar transport loads them for the ciliary compartment. The polypeptide is Protein kintoun (Drosophila willistoni (Fruit fly)).